The primary structure comprises 557 residues: Dihydroxy-acid dehydratase (557 aa).

Asp78 provides a ligand contact to Mg(2+). Cys119 is a binding site for [2Fe-2S] cluster. 2 residues coordinate Mg(2+): Asp120 and Lys121. Position 121 is an N6-carboxylysine (Lys121). Cys192 is a [2Fe-2S] cluster binding site. A Mg(2+)-binding site is contributed by Glu446. Ser472 (proton acceptor) is an active-site residue.

It belongs to the IlvD/Edd family. Homodimer. [2Fe-2S] cluster is required as a cofactor. Requires Mg(2+) as cofactor.

It carries out the reaction (2R)-2,3-dihydroxy-3-methylbutanoate = 3-methyl-2-oxobutanoate + H2O. The enzyme catalyses (2R,3R)-2,3-dihydroxy-3-methylpentanoate = (S)-3-methyl-2-oxopentanoate + H2O. The protein operates within amino-acid biosynthesis; L-isoleucine biosynthesis; L-isoleucine from 2-oxobutanoate: step 3/4. Its pathway is amino-acid biosynthesis; L-valine biosynthesis; L-valine from pyruvate: step 3/4. In terms of biological role, functions in the biosynthesis of branched-chain amino acids. Catalyzes the dehydration of (2R,3R)-2,3-dihydroxy-3-methylpentanoate (2,3-dihydroxy-3-methylvalerate) into 2-oxo-3-methylpentanoate (2-oxo-3-methylvalerate) and of (2R)-2,3-dihydroxy-3-methylbutanoate (2,3-dihydroxyisovalerate) into 2-oxo-3-methylbutanoate (2-oxoisovalerate), the penultimate precursor to L-isoleucine and L-valine, respectively. This Campylobacter fetus subsp. fetus (strain 82-40) protein is Dihydroxy-acid dehydratase.